We begin with the raw amino-acid sequence, 417 residues long: MRSLLLGTLCLLAVALAAEVKKPVEAAAPGTAEKLSSKATTLAERSTGLAFSLYQAMAKDQAVENILLSPLVVASSLGLVSLGGKATTASQAKAVLSAEKLRDEEVHTGLGELVRSLSNSTARNVTWKLGSRLYGPSSVSFADDFVRSSKQHYNCEHSKINFRDKRSALQSINEWASQTTDGKLPEVTKDVERTDGALLVNAMFFKPHWDEKFHHKMVDNRGFMVTRSYTVGVTMMHRTGLYNYYDDEKEKLQLVEMPLAHKLSSLIILMPHHVEPLERLEKLLTKEQLKTWMGKMQKKAVAISLPKGVVEVTHDLQKHLAGLGLTEAIDKNKADLSRMSGKKDLYLASVFHATAFEWDTEGNPFDQDIYGREELRSPKLFYADHPFIFLVRDNQSGSLLFIGRLVRPKGDKMRDEL.

The N-terminal stretch at Met1 to Ala17 is a signal peptide. Lys93 carries the post-translational modification N6-succinyllysine. Residues Asn119 and Asn124 are each glycosylated (N-linked (GlcNAc...) asparagine). Ser140 is subject to Phosphoserine. An N6-acetyllysine modification is found at Lys206. Lys295 carries the post-translational modification N6-succinyllysine. Lys318 is subject to N6-acetyllysine. N-linked (GlcNAc...) asparagine glycosylation occurs at Asn394. The Prevents secretion from ER motif lies at Arg414–Leu417.

This sequence belongs to the serpin family.

The protein localises to the endoplasmic reticulum lumen. Binds specifically to collagen. Could be involved as a chaperone in the biosynthetic pathway of collagen. The chain is Serpin H1 (Serpinh1) from Rattus norvegicus (Rat).